The primary structure comprises 167 residues: MARYEDLPYRTCVGMMLINRAGLVFIGRRAGGIEHVDDTHVWQMPQGGVDPGEDTWEAAKRELYEETNVRSVEKIAEVPDWLIYDIPRTVAGRAWKGRYRGQRQKWFAIRFTGQDSEIDIIAPPGHKSEFTSWRWEPMLNLPDLIVPFKRPVYERVVKEFSQLAIAV.

The region spanning 8–158 (PYRTCVGMML…KRPVYERVVK (151 aa)) is the Nudix hydrolase domain. The Nudix box motif lies at 47 to 68 (GGVDPGEDTWEAAKRELYEETN).

Belongs to the Nudix hydrolase family. RppH subfamily. A divalent metal cation is required as a cofactor.

In terms of biological role, accelerates the degradation of transcripts by removing pyrophosphate from the 5'-end of triphosphorylated RNA, leading to a more labile monophosphorylated state that can stimulate subsequent ribonuclease cleavage. The chain is RNA pyrophosphohydrolase from Rhodopseudomonas palustris (strain HaA2).